The following is a 215-amino-acid chain: 3-demethoxyubiquinol 3-hydroxylase (215 aa).

Residues glutamate 64, glutamate 94, histidine 97, glutamate 146, glutamate 178, and histidine 181 each contribute to the Fe cation site.

Belongs to the COQ7 family. Fe cation is required as a cofactor.

The protein resides in the cell membrane. It carries out the reaction a 5-methoxy-2-methyl-3-(all-trans-polyprenyl)benzene-1,4-diol + AH2 + O2 = a 3-demethylubiquinol + A + H2O. It functions in the pathway cofactor biosynthesis; ubiquinone biosynthesis. Its function is as follows. Catalyzes the hydroxylation of 2-nonaprenyl-3-methyl-6-methoxy-1,4-benzoquinol during ubiquinone biosynthesis. This is 3-demethoxyubiquinol 3-hydroxylase from Coxiella burnetii (strain CbuG_Q212) (Coxiella burnetii (strain Q212)).